The primary structure comprises 351 residues: Porphobilinogen deaminase (351 aa).

An S-(dipyrrolylmethanemethyl)cysteine modification is found at cysteine 242.

It belongs to the HMBS family. In terms of assembly, monomer. The cofactor is dipyrromethane.

It catalyses the reaction 4 porphobilinogen + H2O = hydroxymethylbilane + 4 NH4(+). Its pathway is porphyrin-containing compound metabolism; protoporphyrin-IX biosynthesis; coproporphyrinogen-III from 5-aminolevulinate: step 2/4. Functionally, tetrapolymerization of the monopyrrole PBG into the hydroxymethylbilane pre-uroporphyrinogen in several discrete steps. This is Porphobilinogen deaminase from Rickettsia africae (strain ESF-5).